Here is a 169-residue protein sequence, read N- to C-terminus: Shikimate kinase (169 aa).

ATP is bound at residue 12–17 (GCGKST). Ser-16 provides a ligand contact to Mg(2+). 3 residues coordinate substrate: Asp-34, Arg-57, and Gly-79. Position 116 (Arg-116) interacts with ATP. A substrate-binding site is contributed by Arg-133.

This sequence belongs to the shikimate kinase family. Monomer. Requires Mg(2+) as cofactor.

Its subcellular location is the cytoplasm. It carries out the reaction shikimate + ATP = 3-phosphoshikimate + ADP + H(+). Its pathway is metabolic intermediate biosynthesis; chorismate biosynthesis; chorismate from D-erythrose 4-phosphate and phosphoenolpyruvate: step 5/7. Catalyzes the specific phosphorylation of the 3-hydroxyl group of shikimic acid using ATP as a cosubstrate. The protein is Shikimate kinase of Clostridium beijerinckii (strain ATCC 51743 / NCIMB 8052) (Clostridium acetobutylicum).